We begin with the raw amino-acid sequence, 861 residues long: DNA primase (861 aa).

A CHC2-type zinc finger spans residues 805-843 (CLTRNHKGNRENVLVYLEFKVDNNRILIILWSKCFTTKC).

This sequence belongs to the herpesviridae DNA primase family. As to quaternary structure, associates with the helicase and the primase-associated factor to form the helicase-primase factor.

It localises to the host nucleus. Its function is as follows. Essential component of the helicase/primase complex. Unwinds the DNA at the replication forks and generates single-stranded DNA for both leading and lagging strand synthesis. The primase initiates primer synthesis and thereby produces large amount of short RNA primers on the lagging strand that the polymerase elongates using dNTPs. The polypeptide is DNA primase (U43) (Human herpesvirus 7 (strain JI) (HHV-7)).